Reading from the N-terminus, the 346-residue chain is KH domain-containing, RNA-binding, signal transduction-associated protein 2 (346 aa).

The KH domain maps to 65-131; it reads LIPVQQYPKF…AKYAHLSNDL (67 aa). A disordered region spans residues 175–291; it reads LSYLNGSDDP…SYESYDDNYS (117 aa). The span at 195 to 224 shows a compositional bias: low complexity; that stretch reads LRLTSTASPRGRGSAAPPAPPGRGAAAPRG. Over residues 268–287 the composition is skewed to acidic residues; sequence YGYDDGYDGEYDDQSYESYD.

The protein belongs to the KHDRBS family.

Its subcellular location is the nucleus. RNA-binding protein that plays a role in the regulation of alternative splicing. The chain is KH domain-containing, RNA-binding, signal transduction-associated protein 2 (khdrbs2) from Danio rerio (Zebrafish).